The chain runs to 353 residues: DNA polymerase IV (353 aa).

Positions 6 to 187 constitute a UmuC domain; it reads IIHIDCDCFY…LPVTKLHGVG (182 aa). Residues D10 and D105 each contribute to the Mg(2+) site. E106 is an active-site residue.

This sequence belongs to the DNA polymerase type-Y family. In terms of assembly, monomer. The cofactor is Mg(2+).

Its subcellular location is the cytoplasm. The catalysed reaction is DNA(n) + a 2'-deoxyribonucleoside 5'-triphosphate = DNA(n+1) + diphosphate. Poorly processive, error-prone DNA polymerase involved in untargeted mutagenesis. Copies undamaged DNA at stalled replication forks, which arise in vivo from mismatched or misaligned primer ends. These misaligned primers can be extended by PolIV. Exhibits no 3'-5' exonuclease (proofreading) activity. May be involved in translesional synthesis, in conjunction with the beta clamp from PolIII. This is DNA polymerase IV from Pseudomonas syringae pv. tomato (strain ATCC BAA-871 / DC3000).